The chain runs to 125 residues: Small ribosomal subunit protein eS8 (125 aa).

Belongs to the eukaryotic ribosomal protein eS8 family. In terms of assembly, part of the 30S ribosomal subunit.

In Methanocorpusculum labreanum (strain ATCC 43576 / DSM 4855 / Z), this protein is Small ribosomal subunit protein eS8.